Reading from the N-terminus, the 215-residue chain is Probable phosphoglycerate mutase GpmB (215 aa).

Substrate contacts are provided by residues 8–15, 21–22, arginine 58, arginine 60, 82–85, 104–105, and 151–152; these read RHGETQWN, QG, ELNM, RR, and GI. Histidine 9 serves as the catalytic Tele-phosphohistidine intermediate. Glutamate 82 functions as the Proton donor/acceptor in the catalytic mechanism.

It belongs to the phosphoglycerate mutase family. GpmB subfamily.

The enzyme catalyses (2R)-2-phosphoglycerate = (2R)-3-phosphoglycerate. It participates in carbohydrate degradation; glycolysis; pyruvate from D-glyceraldehyde 3-phosphate: step 3/5. This chain is Probable phosphoglycerate mutase GpmB, found in Escherichia coli O1:K1 / APEC.